Reading from the N-terminus, the 191-residue chain is Small ribosomal subunit protein uS10c (191 aa).

The N-terminal 56 residues, 1 to 56, are a transit peptide targeting the chloroplast; sequence MAVSTVSSFLLPSFGIPSSSPSSTRLKVSLLPSSSTHGGLSSCVLTKPSVSLTKVF.

Belongs to the universal ribosomal protein uS10 family. Part of the 30S ribosomal subunit.

The protein resides in the plastid. Its subcellular location is the chloroplast. This is Small ribosomal subunit protein uS10c (RPS10) from Arabidopsis thaliana (Mouse-ear cress).